The sequence spans 87 residues: uncharacterized protein (87 aa).

Transmembrane regions (helical) follow at residues 25-45 (LVAAVIAVTMALWLGVQWLGG) and 53-73 (YAFLADLAAIGALIWSLLVTF).

The protein resides in the cell membrane. This is an uncharacterized protein from Paracoccus denitrificans.